The following is a 148-amino-acid chain: Holo-[acyl-carrier-protein] synthase (148 aa).

2 residues coordinate Mg(2+): Asp-9 and Glu-63.

Belongs to the P-Pant transferase superfamily. AcpS family. Mg(2+) serves as cofactor.

Its subcellular location is the cytoplasm. It carries out the reaction apo-[ACP] + CoA = holo-[ACP] + adenosine 3',5'-bisphosphate + H(+). Its function is as follows. Transfers the 4'-phosphopantetheine moiety from coenzyme A to a Ser of acyl-carrier-protein. This Burkholderia cenocepacia (strain HI2424) protein is Holo-[acyl-carrier-protein] synthase.